We begin with the raw amino-acid sequence, 333 residues long: Ketol-acid reductoisomerase (NADP(+)) (333 aa).

Positions 6-186 (TRVYTECDAD…GALRAGAIQT (181 aa)) constitute a KARI N-terminal Rossmann domain. NADP(+) contacts are provided by residues 29–32 (YGSQ), Lys52, Ser55, Ser57, and 87–90 (DPAQ). Residue His112 is part of the active site. NADP(+) is bound at residue Gly138. One can recognise a KARI C-terminal knotted domain in the interval 187-332 (TFTEETETDL…ARLRALFSWS (146 aa)). Mg(2+) is bound by residues Asp195, Glu199, Glu231, and Glu235. Ser256 contributes to the substrate binding site.

It belongs to the ketol-acid reductoisomerase family. It depends on Mg(2+) as a cofactor.

It catalyses the reaction (2R)-2,3-dihydroxy-3-methylbutanoate + NADP(+) = (2S)-2-acetolactate + NADPH + H(+). The enzyme catalyses (2R,3R)-2,3-dihydroxy-3-methylpentanoate + NADP(+) = (S)-2-ethyl-2-hydroxy-3-oxobutanoate + NADPH + H(+). Its pathway is amino-acid biosynthesis; L-isoleucine biosynthesis; L-isoleucine from 2-oxobutanoate: step 2/4. The protein operates within amino-acid biosynthesis; L-valine biosynthesis; L-valine from pyruvate: step 2/4. Its function is as follows. Involved in the biosynthesis of branched-chain amino acids (BCAA). Catalyzes an alkyl-migration followed by a ketol-acid reduction of (S)-2-acetolactate (S2AL) to yield (R)-2,3-dihydroxy-isovalerate. In the isomerase reaction, S2AL is rearranged via a Mg-dependent methyl migration to produce 3-hydroxy-3-methyl-2-ketobutyrate (HMKB). In the reductase reaction, this 2-ketoacid undergoes a metal-dependent reduction by NADPH to yield (R)-2,3-dihydroxy-isovalerate. The chain is Ketol-acid reductoisomerase (NADP(+)) from Tropheryma whipplei (strain TW08/27) (Whipple's bacillus).